An 85-amino-acid chain; its full sequence is Teretoxin Tan9.6 (85 aa).

An N-terminal signal peptide occupies residues 1–21 (MMSKTGALLLTFMILVLFSMA). Positions 22–52 (AADALGERFEDHEQKIREQDAGVGLLSLMGR) are excised as a propeptide.

In terms of processing, contains 3 disulfide bonds. As to expression, expressed by the venom duct.

It localises to the secreted. The sequence is that of Teretoxin Tan9.6 from Terebra anilis (Auger snail).